The chain runs to 268 residues: Virulence plasmid ParA family protein pGP5-D (268 aa).

ATP is bound at residue phenylalanine 13–threonine 20.

This sequence belongs to the ParA family.

The sequence is that of Virulence plasmid ParA family protein pGP5-D from Chlamydia muridarum (strain MoPn / Nigg).